The chain runs to 364 residues: Phosphoserine aminotransferase (364 aa).

L-glutamate is bound at residue Arg40. Pyridoxal 5'-phosphate contacts are provided by residues 74–75 (GT), Trp100, Thr149, Asp170, and Gln193. Lys194 carries the post-translational modification N6-(pyridoxal phosphate)lysine. 235 to 236 (NT) is a pyridoxal 5'-phosphate binding site.

This sequence belongs to the class-V pyridoxal-phosphate-dependent aminotransferase family. SerC subfamily. Homodimer. It depends on pyridoxal 5'-phosphate as a cofactor. In terms of tissue distribution, expressed in ovary and head.

The enzyme catalyses O-phospho-L-serine + 2-oxoglutarate = 3-phosphooxypyruvate + L-glutamate. It carries out the reaction 4-(phosphooxy)-L-threonine + 2-oxoglutarate = (R)-3-hydroxy-2-oxo-4-phosphooxybutanoate + L-glutamate. Its pathway is amino-acid biosynthesis; L-serine biosynthesis; L-serine from 3-phospho-D-glycerate: step 2/3. It functions in the pathway cofactor biosynthesis; pyridoxine 5'-phosphate biosynthesis; pyridoxine 5'-phosphate from D-erythrose 4-phosphate: step 3/5. Its function is as follows. Catalyzes the reversible conversion of 3-phosphohydroxypyruvate to phosphoserine and of 3-hydroxy-2-oxo-4-phosphonooxybutanoate to phosphohydroxythreonine. In Drosophila melanogaster (Fruit fly), this protein is Phosphoserine aminotransferase.